The chain runs to 207 residues: LPS-assembly lipoprotein LptE (207 aa).

The first 19 residues, 1–19 (MRHRILTLLLGLAVLVTAG), serve as a signal peptide directing secretion. The N-palmitoyl cysteine moiety is linked to residue Cys20. A lipid anchor (S-diacylglycerol cysteine) is attached at Cys20. Residues 168–207 (KNTQKNGDKPVSDANAAQGSTPTAVNETTLGEPAVSTSAK) form a disordered region. A compositionally biased stretch (polar residues) spans 182 to 207 (NAAQGSTPTAVNETTLGEPAVSTSAK).

It belongs to the LptE lipoprotein family. Component of the lipopolysaccharide transport and assembly complex. Interacts with LptD.

The protein localises to the cell outer membrane. Its function is as follows. Together with LptD, is involved in the assembly of lipopolysaccharide (LPS) at the surface of the outer membrane. Required for the proper assembly of LptD. Binds LPS and may serve as the LPS recognition site at the outer membrane. The protein is LPS-assembly lipoprotein LptE of Yersinia pseudotuberculosis serotype O:1b (strain IP 31758).